The primary structure comprises 210 residues: Histone H1A (210 aa).

Disordered stretches follow at residues 1-49 and 101-210; these read MAEA…VSEQ and KGSG…PKKK. Composition is skewed to low complexity over residues 26–45 and 129–142; these read KKAAAARGAAKSKKPSSGPS and PLAAEAKKPAAAAK. The region spanning 42 to 113 is the H15 domain; it reads SGPSVSEQIV…GASGSFKLNK (72 aa). Composition is skewed to basic residues over residues 143 to 153 and 160 to 180; these read KTAKSPKKPKK and SPKKLKKPAKAAKSPAKKTAV. Residues 181 to 192 are compositionally biased toward low complexity; it reads KPKVAAKSPAKA. The span at 193-210 shows a compositional bias: basic residues; sequence KAAKPKVAKAKKAAPKKK.

The protein belongs to the histone H1/H5 family.

It is found in the nucleus. The protein localises to the chromosome. Histones H1 are necessary for the condensation of nucleosome chains into higher-order structures. This Xenopus laevis (African clawed frog) protein is Histone H1A.